Consider the following 330-residue polypeptide: Peroxidase 70 (330 aa).

A signal peptide spans 1–24 (MRSFTNLNPCYVLLPFFLVLATNA). Cystine bridges form between Cys-43-Cys-119, Cys-76-Cys-81, Cys-125-Cys-326, and Cys-202-Cys-234. The active-site Proton acceptor is His-74. 5 residues coordinate Ca(2+): Asp-75, Val-78, Gly-80, Asp-82, and Ser-84. Substrate is bound at residue Pro-165. Heme b is bound at residue His-195. Thr-196 serves as a coordination point for Ca(2+). 3 residues coordinate Ca(2+): Asp-247, Ser-250, and Asp-255.

It belongs to the peroxidase family. Classical plant (class III) peroxidase subfamily. Heme b is required as a cofactor. Ca(2+) serves as cofactor.

It localises to the secreted. It carries out the reaction 2 a phenolic donor + H2O2 = 2 a phenolic radical donor + 2 H2O. Functionally, removal of H(2)O(2), oxidation of toxic reductants, biosynthesis and degradation of lignin, suberization, auxin catabolism, response to environmental stresses such as wounding, pathogen attack and oxidative stress. These functions might be dependent on each isozyme/isoform in each plant tissue. The polypeptide is Peroxidase 70 (PER70) (Arabidopsis thaliana (Mouse-ear cress)).